A 360-amino-acid chain; its full sequence is sn-glycerol-3-phosphate import ATP-binding protein UgpC (360 aa).

An ABC transporter domain is found at 4–235; that stretch reads LSLKGVKKSY…PATTFVASFI (232 aa). 37–44 contributes to the ATP binding site; the sequence is GPSGCGKS.

It belongs to the ABC transporter superfamily. sn-glycerol-3-phosphate importer (TC 3.A.1.1.3) family. As to quaternary structure, the complex is composed of two ATP-binding proteins (UgpC), two transmembrane proteins (UgpA and UgpE) and a solute-binding protein (UgpB).

It localises to the cell inner membrane. It carries out the reaction sn-glycerol 3-phosphate(out) + ATP + H2O = sn-glycerol 3-phosphate(in) + ADP + phosphate + H(+). Part of the ABC transporter complex UgpBAEC involved in sn-glycerol-3-phosphate (G3P) import. Responsible for energy coupling to the transport system. This is sn-glycerol-3-phosphate import ATP-binding protein UgpC from Burkholderia mallei (strain ATCC 23344).